Consider the following 305-residue polypeptide: ATP synthase gamma chain (305 aa).

It belongs to the ATPase gamma chain family. In terms of assembly, F-type ATPases have 2 components, CF(1) - the catalytic core - and CF(0) - the membrane proton channel. CF(1) has five subunits: alpha(3), beta(3), gamma(1), delta(1), epsilon(1). CF(0) has three main subunits: a, b and c.

It localises to the cell membrane. Functionally, produces ATP from ADP in the presence of a proton gradient across the membrane. The gamma chain is believed to be important in regulating ATPase activity and the flow of protons through the CF(0) complex. This Streptomyces avermitilis (strain ATCC 31267 / DSM 46492 / JCM 5070 / NBRC 14893 / NCIMB 12804 / NRRL 8165 / MA-4680) protein is ATP synthase gamma chain.